Reading from the N-terminus, the 122-residue chain is Large ribosomal subunit protein uL14 (122 aa).

The protein belongs to the universal ribosomal protein uL14 family. In terms of assembly, part of the 50S ribosomal subunit. Forms a cluster with proteins L3 and L19. In the 70S ribosome, L14 and L19 interact and together make contacts with the 16S rRNA in bridges B5 and B8.

Binds to 23S rRNA. Forms part of two intersubunit bridges in the 70S ribosome. The chain is Large ribosomal subunit protein uL14 from Brucella anthropi (strain ATCC 49188 / DSM 6882 / CCUG 24695 / JCM 21032 / LMG 3331 / NBRC 15819 / NCTC 12168 / Alc 37) (Ochrobactrum anthropi).